Consider the following 177-residue polypeptide: Parathyroid hormone-related protein (177 aa).

The first 24 residues, 1–24 (MQRRLVQQWSVAVFLLSYAVPSCG), serve as a signal peptide directing secretion. The propeptide occupies 25–34 (RSVEGLSRRL). Residues 57 to 68 (RFFLHHLIAEIH) are important for receptor binding. Residues 74 to 177 (ATSEVSPNSK…TSLELDSRRH (104 aa)) form a disordered region. Over residues 76–90 (SEVSPNSKPSPNTKN) the composition is skewed to polar residues. Positions 108–129 (TNKVETYKEQPLKTPGKKKKGK) match the Nuclear localization signal motif. Over residues 109 to 118 (NKVETYKEQP) the composition is skewed to basic and acidic residues. A compositionally biased stretch (basic residues) spans 122 to 132 (PGKKKKGKPGK).

Belongs to the parathyroid hormone family. As to quaternary structure, interacts with PTH1R (via N-terminal extracellular domain). In terms of processing, there are 3 principal secretory forms, called PTHrP[1-36], PTHrP[38-94], and osteostatin (PTHrP[107-139]) arising from endoproteolytic cleavage of the initial translation product. Each of these secretory forms is believed to have one or more of its own receptors that mediates the normal paracrine, autocrine and endocrine actions. As to expression, ubiquitous. Also expressed in the mammary gland.

The protein resides in the secreted. The protein localises to the cytoplasm. It is found in the nucleus. Its function is as follows. Neuroendocrine peptide which is a critical regulator of cellular and organ growth, development, migration, differentiation and survival and of epithelial calcium ion transport. Acts by binding to its receptor, PTH1R, activating G protein-coupled receptor signaling. Regulates endochondral bone development and epithelial-mesenchymal interactions during the formation of the mammary glands and teeth. Required for skeletal homeostasis. Promotes mammary mesenchyme differentiation and bud outgrowth by modulating mesenchymal cell responsiveness to BMPs. Up-regulates BMPR1A expression in the mammary mesenchyme and this increases the sensitivity of these cells to BMPs and allows them to respond to BMP4 in a paracrine and/or autocrine fashion. BMP4 signaling in the mesenchyme, in turn, triggers epithelial outgrowth and augments MSX2 expression, which causes the mammary mesenchyme to inhibit hair follicle formation within the nipple sheath. Promotes colon cancer cell migration and invasion in an integrin alpha-6/beta-1-dependent manner through activation of Rac1. Potent inhibitor of osteoclastic bone resorption. In Homo sapiens (Human), this protein is Parathyroid hormone-related protein.